The chain runs to 403 residues: Phosphopentomutase (403 aa).

Mn(2+) is bound by residues D13, D298, H303, D339, H340, and H351.

Belongs to the phosphopentomutase family. Mn(2+) serves as cofactor.

Its subcellular location is the cytoplasm. The enzyme catalyses 2-deoxy-alpha-D-ribose 1-phosphate = 2-deoxy-D-ribose 5-phosphate. The catalysed reaction is alpha-D-ribose 1-phosphate = D-ribose 5-phosphate. Its pathway is carbohydrate degradation; 2-deoxy-D-ribose 1-phosphate degradation; D-glyceraldehyde 3-phosphate and acetaldehyde from 2-deoxy-alpha-D-ribose 1-phosphate: step 1/2. Functionally, isomerase that catalyzes the conversion of deoxy-ribose 1-phosphate (dRib-1-P) and ribose 1-phosphate (Rib-1-P) to deoxy-ribose 5-phosphate (dRib-5-P) and ribose 5-phosphate (Rib-5-P), respectively. This chain is Phosphopentomutase, found in Streptococcus pneumoniae (strain Hungary19A-6).